Reading from the N-terminus, the 211-residue chain is Uridine kinase (211 aa).

13–20 (GGSGSGKT) contacts ATP.

The protein belongs to the uridine kinase family.

It localises to the cytoplasm. The catalysed reaction is uridine + ATP = UMP + ADP + H(+). The enzyme catalyses cytidine + ATP = CMP + ADP + H(+). The protein operates within pyrimidine metabolism; CTP biosynthesis via salvage pathway; CTP from cytidine: step 1/3. It participates in pyrimidine metabolism; UMP biosynthesis via salvage pathway; UMP from uridine: step 1/1. The sequence is that of Uridine kinase from Lactobacillus johnsonii (strain CNCM I-12250 / La1 / NCC 533).